Reading from the N-terminus, the 202-residue chain is Superoxide dismutase [Cu-Zn], chloroplastic (202 aa).

Residues 1–48 (MASQTLVSPSPLSSHSLLRTSFSGVSVKLAPQFSTLATSNFKPLTVVA) constitute a chloroplast transit peptide. Residues His94, His96, and His111 each contribute to the Cu cation site. Residues Cys105 and Cys194 are joined by a disulfide bond. Zn(2+) contacts are provided by His111, His119, His128, and Asp131. A Cu cation-binding site is contributed by His168.

It belongs to the Cu-Zn superoxide dismutase family. Homotetramer. Cu cation is required as a cofactor. Zn(2+) serves as cofactor.

The protein localises to the plastid. It is found in the chloroplast. It carries out the reaction 2 superoxide + 2 H(+) = H2O2 + O2. Its function is as follows. Destroys radicals which are normally produced within the cells and which are toxic to biological systems. This is Superoxide dismutase [Cu-Zn], chloroplastic (SODCP) from Pisum sativum (Garden pea).